The primary structure comprises 1059 residues: MIIEDFEALKHWLSKTLEPICDADPSALAKYVLALVKKDKSDRELNALCIDQLDVFLQKETQGFVDKLFDAINTKSYLPQPDSTSTAVVKLDSFEHQEKEIKKDEVNKEEEKEKKAPRRLNQSPQPSSTRHKDTRENRKRSNSDRESNSIQNSFRSGLPEQKQDVDAAPPRLNSNKVQNAKNTRSRDDRKRDDRFRKREYDRNVPRRDSYRDRYNRRRGRSRSYSRSRSRSWSKERQRDRDRSRSRTRSRDKDSGKPKFDLDRPDPVDNSYASGSSVPHIGSAHFPVPTLSSTITVITPSHHGNSSAENWPEFHEDQVDHSSYGRLQMQKKRCRDYDEKGFCMRGDMCPFDHGSDPVVVEDVNLPGILPFPAPPPVLEGPPPPGLPPPPSLLTPPPVNLQPPPVPPPGPLPPSLPPVTGPPPPLPPLQPAGMDAPPNSATSSVPTVVTTGILHPPPVPPSSLFPSAAAAAGPIPLFPETYEADGYNPEAPSMTTTSRPLYRHRVHAQRPNLIGLTSGDMDLPTPREKNNMRIVVDSESRKRNLGSGDCVLPSKKPWFDKSNFNNRMNPGFQKKPLFPNENTKLELRRIPPELNNISKLNEHFSKFGTIVNLQVAYKGDPEGALIQFATHGEAKKAISSTEAVLNNRFIRMYWHREGSSQQLQTPGLPKVVHLTVPQQPNLSVMKQSIKERLGPVPANNSEPSVAQNINTETTQNIAKVPVKERLGYMSKTVSAATEKVFSTSTGLTKTVYNPAALKAMQKSVLYPICNDNGDAQKKKQEALKLQQDVRKKKQEILEKRIETQKILISKLEKNKNMKSEDKAEILKTLETLTNSITKLRDELKAVSSTGNVVKNNKSKAQMQKELLDTELDLYNKIQAGDDVTELRKKYTELQLDAAKRGILSSGRGRGVHLRGRGVIRGRGRVLHGRGRGASVHAVVDHRPRALKISGFTEGDREYLLPHFAHFGEIEDCQIDDSSLHAIITFKTRAEAEAAAVHGAQFKGQDLKLAWNKPVPNASSTEVEDADQEEEEFHEDSIVDDSLLQDDDEEEEDDNESRSWRR.

2 stretches are compositionally biased toward basic and acidic residues: residues 98 to 114 (EKEIKKDEVNKEEEKEK) and 130 to 147 (RHKDTRENRKRSNSDRES). The segment at 98-275 (EKEIKKDEVN…PVDNSYASGS (178 aa)) is disordered. A compositionally biased stretch (polar residues) spans 172 to 182 (LNSNKVQNAKN). Residues 184–213 (RSRDDRKRDDRFRKREYDRNVPRRDSYRDR) are compositionally biased toward basic and acidic residues. Residues 214-231 (YNRRRGRSRSYSRSRSRS) are compositionally biased toward basic residues. The segment covering 232-266 (WSKERQRDRDRSRSRTRSRDKDSGKPKFDLDRPDP) has biased composition (basic and acidic residues). The C3H1-type zinc finger occupies 327–355 (QMQKKRCRDYDEKGFCMRGDMCPFDHGSD). Residues 375-428 (PVLEGPPPPGLPPPPSLLTPPPVNLQPPPVPPPGPLPPSLPPVTGPPPPLPPLQ) show a composition bias toward pro residues. Positions 375–443 (PVLEGPPPPG…APPNSATSSV (69 aa)) are disordered. The segment covering 434-443 (APPNSATSSV) has biased composition (low complexity). Positions 581–655 (TKLELRRIPP…RFIRMYWHRE (75 aa)) constitute an RRM 1 domain. Positions 771 to 873 (GDAQKKKQEA…LLDTELDLYN (103 aa)) form a coiled coil. Positions 942 to 1011 (RALKISGFTE…QDLKLAWNKP (70 aa)) constitute an RRM 2 domain. Residues 1010 to 1059 (KPVPNASSTEVEDADQEEEEFHEDSIVDDSLLQDDDEEEEDDNESRSWRR) form a disordered region. Acidic residues-rich tracts occupy residues 1019-1031 (EVEDADQEEEEFH) and 1040-1052 (LLQDDDEEEEDDN).

In terms of biological role, may be involved in the turnover of nuclear polyadenylated (pA+) RNA. This is RNA-binding protein 26 from Xenopus laevis (African clawed frog).